The sequence spans 369 residues: 3-dehydroquinate synthase (369 aa).

NAD(+) contacts are provided by residues 110-114 (GVIGD), 134-135 (TT), Lys147, Lys156, and 174-177 (TLKT). Zn(2+)-binding residues include Glu189, His254, and His271.

It belongs to the sugar phosphate cyclases superfamily. Dehydroquinate synthase family. Requires Co(2+) as cofactor. It depends on Zn(2+) as a cofactor. NAD(+) is required as a cofactor.

It localises to the cytoplasm. It carries out the reaction 7-phospho-2-dehydro-3-deoxy-D-arabino-heptonate = 3-dehydroquinate + phosphate. The protein operates within metabolic intermediate biosynthesis; chorismate biosynthesis; chorismate from D-erythrose 4-phosphate and phosphoenolpyruvate: step 2/7. Catalyzes the conversion of 3-deoxy-D-arabino-heptulosonate 7-phosphate (DAHP) to dehydroquinate (DHQ). The protein is 3-dehydroquinate synthase of Cyanothece sp. (strain PCC 7425 / ATCC 29141).